The chain runs to 500 residues: Probable malate:quinone oxidoreductase (500 aa).

The protein belongs to the MQO family. The cofactor is FAD.

It carries out the reaction (S)-malate + a quinone = a quinol + oxaloacetate. The protein operates within carbohydrate metabolism; tricarboxylic acid cycle; oxaloacetate from (S)-malate (quinone route): step 1/1. This is Probable malate:quinone oxidoreductase from Bacillus thuringiensis (strain Al Hakam).